Here is a 329-residue protein sequence, read N- to C-terminus: Serine, glycine and glutamine-rich protein (329 aa).

An N-terminal signal peptide occupies residues 1–16; the sequence is MKTVLLFVVLVGLAYC. A compositionally biased stretch (low complexity) spans 38 to 48; the sequence is SSSSSSSSSSS. The interval 38 to 80 is disordered; sequence SSSSSSSSSSSSGGGGSSGGGASGGGGGSSSGGGGASGGGGGG. Residues 49 to 80 are compositionally biased toward gly residues; sequence SGGGGSSGGGASGGGGGSSSGGGGASGGGGGG.

Prismatic layer of shell (at protein level). Expressed primarily in the mantle with highest level in the mantle edge and lower level in the mantle pallium.

The protein localises to the secreted. This chain is Serine, glycine and glutamine-rich protein, found in Pinctada maxima (Silver-lipped pearl oyster).